A 409-amino-acid polypeptide reads, in one-letter code: MAREKFERTKPHVNIGTIGHVDHGKTTLTAAITMAMAARGGSAGKKYDEIDSSPEEKARGITINTAHVEYETATRHYAHVDCPGHADYVKNMITGAAQMDGAILVVSGADGPMPQTKEHILLAKQVGVPNIVVFLNKEDQVDDEELLELVDMEIRETLSSYDFPGDEIPVIAGSALLALEALSSNPKIGDGEDKWVDKIFSLMDNVDSYIPTPARETDKTFLMAVEDVFSITGRGTVATGRVERGTVKVGASIEIIGYVDTRVATVTGLEMFQKTLEESVAGDNVGVLLRGIQKEDIERGMVLAQPGTITPHTKFEAQVYVLKKEEGGRHTPFFPGYRPQFYVRTTDVTGKIESFISDEGDEATMVMPGDRVKMVVELIQPIAIENGMRFAIREGGRTVGAGVVSSILK.

The region spanning 10–214 (KPHVNIGTIG…NVDSYIPTPA (205 aa)) is the tr-type G domain. Positions 19-26 (GHVDHGKT) are G1. 19 to 26 (GHVDHGKT) provides a ligand contact to GTP. Mg(2+) is bound at residue T26. The tract at residues 60–64 (GITIN) is G2. Residues 81–84 (DCPG) are G3. Residues 81–85 (DCPGH) and 136–139 (NKED) contribute to the GTP site. Residues 136 to 139 (NKED) are G4. Residues 174 to 176 (SAL) form a G5 region.

It belongs to the TRAFAC class translation factor GTPase superfamily. Classic translation factor GTPase family. EF-Tu/EF-1A subfamily.

The protein resides in the plastid. The protein localises to the chloroplast. It catalyses the reaction GTP + H2O = GDP + phosphate + H(+). Functionally, GTP hydrolase that promotes the GTP-dependent binding of aminoacyl-tRNA to the A-site of ribosomes during protein biosynthesis. In Ostreococcus tauri, this protein is Elongation factor Tu, chloroplastic (tufA).